Here is a 207-residue protein sequence, read N- to C-terminus: Ribonuclease HII (207 aa).

The 189-residue stretch at 19 to 207 folds into the RNase H type-2 domain; the sequence is HCIAGVDEVG…PVKKALGIEE (189 aa). Residues Asp-25, Glu-26, and Asp-117 each contribute to the a divalent metal cation site.

The protein belongs to the RNase HII family. Requires Mn(2+) as cofactor. Mg(2+) serves as cofactor.

The protein resides in the cytoplasm. It carries out the reaction Endonucleolytic cleavage to 5'-phosphomonoester.. Endonuclease that specifically degrades the RNA of RNA-DNA hybrids. This is Ribonuclease HII from Vibrio vulnificus (strain CMCP6).